The chain runs to 344 residues: Dihydroorotase (344 aa).

2 residues coordinate Zn(2+): histidine 13 and histidine 15. Residues 15–17 and asparagine 41 contribute to the substrate site; that span reads HFR. Residues lysine 98, histidine 135, and histidine 173 each coordinate Zn(2+). The residue at position 98 (lysine 98) is an N6-carboxylysine. Substrate is bound at residue histidine 135. Leucine 218 is a substrate binding site. Residue aspartate 246 participates in Zn(2+) binding. Aspartate 246 is a catalytic residue. Residues histidine 250 and alanine 262 each contribute to the substrate site.

It belongs to the metallo-dependent hydrolases superfamily. DHOase family. Class II DHOase subfamily. In terms of assembly, homodimer. Requires Zn(2+) as cofactor.

It carries out the reaction (S)-dihydroorotate + H2O = N-carbamoyl-L-aspartate + H(+). It functions in the pathway pyrimidine metabolism; UMP biosynthesis via de novo pathway; (S)-dihydroorotate from bicarbonate: step 3/3. Its function is as follows. Catalyzes the reversible cyclization of carbamoyl aspartate to dihydroorotate. This is Dihydroorotase from Pseudoalteromonas atlantica (strain T6c / ATCC BAA-1087).